We begin with the raw amino-acid sequence, 804 residues long: Phenylalanine--tRNA ligase beta subunit (804 aa).

One can recognise a tRNA-binding domain in the interval 39-155 (AEGLKKIVVG…ADVKPGEEVY (117 aa)). In terms of domain architecture, B5 spans 408–483 (RNPSVVKTTV…RIYGYDNLKS (76 aa)). Mg(2+) is bound by residues aspartate 461, aspartate 467, glutamate 470, and glutamate 471. An FDX-ACB domain is found at 711 to 804 (PKFPAIERDL…LKESLKIKVR (94 aa)).

The protein belongs to the phenylalanyl-tRNA synthetase beta subunit family. Type 1 subfamily. In terms of assembly, tetramer of two alpha and two beta subunits. The cofactor is Mg(2+).

It is found in the cytoplasm. The enzyme catalyses tRNA(Phe) + L-phenylalanine + ATP = L-phenylalanyl-tRNA(Phe) + AMP + diphosphate + H(+). This chain is Phenylalanine--tRNA ligase beta subunit, found in Lactobacillus johnsonii (strain CNCM I-12250 / La1 / NCC 533).